The sequence spans 227 residues: Transmembrane emp24 domain-containing protein 4 (227 aa).

Positions 1-29 are cleaved as a signal peptide; it reads MAGVGVGPLQGMVRFGLLVLTVCAACARG. Residues 30–194 are Lumenal-facing; it reads LYFHIGETEK…RLTSESTNQR (165 aa). The region spanning 39-137 is the GOLD domain; sequence KRCFIEEIPD…KLRVHLDIQV (99 aa). The N-linked (GlcNAc...) asparagine glycan is linked to Asn-117. Residues 147–176 adopt a coiled-coil conformation; sequence IAAKDKLTELQLRARQLLDQVEQIQKEQDY. Residues 195–212 form a helical membrane-spanning segment; that stretch reads VLWWSIAQTVILILTGIW. The Cytoplasmic segment spans residues 213 to 227; that stretch reads QMRHLKSFFEAKKLV. Positions 220 to 221 match the COPII vesicle coat-binding motif; sequence FF. The COPI vesicle coat-binding motif lies at 220–227; that stretch reads FFEAKKLV.

It belongs to the EMP24/GP25L family.

Its subcellular location is the endoplasmic reticulum membrane. Functionally, involved in vesicular protein trafficking, mainly in the early secretory pathway. Involved in the maintenance of the Golgi apparatus. Appears to play a role in the biosynthesis of secreted cargo including processing. Involved in endoplasmic reticulum stress response. May play a role in the regulation of heat-shock response and apoptosis. The sequence is that of Transmembrane emp24 domain-containing protein 4 (Tmed4) from Mus musculus (Mouse).